The sequence spans 419 residues: Sulfate adenylyltransferase (419 aa).

This sequence belongs to the sulfate adenylyltransferase family.

It catalyses the reaction sulfate + ATP + H(+) = adenosine 5'-phosphosulfate + diphosphate. Its pathway is sulfur metabolism; hydrogen sulfide biosynthesis; sulfite from sulfate: step 1/3. The sequence is that of Sulfate adenylyltransferase from Psychrobacter sp. (strain PRwf-1).